The sequence spans 259 residues: Complement factor D (259 aa).

Residues 1-21 (MADRSGHLAALILLGAAVCVA) form the signal peptide. Positions 22 to 26 (QPRGR) are cleaved as a propeptide — activation peptide. A Peptidase S1 domain is found at 27–254 (ILGGQEAKSH…YVAWIDGVMA (228 aa)). An intrachain disulfide couples Cys52 to Cys68. Residues His67 and Asp115 each act as charge relay system in the active site. 3 disulfides stabilise this stretch: Cys149-Cys215, Cys180-Cys196, and Cys205-Cys230. Catalysis depends on Ser209, which acts as the Charge relay system. The segment at 224-228 (TSGSR) is self-inhibitor loop.

The protein belongs to the peptidase S1 family. CFD is activated by the removal of 5 residues at the N-terminus, named activation peptide, by the MASP-3 isoform of MASP1.

It localises to the secreted. It carries out the reaction Selective cleavage of Arg-|-Lys bond in complement factor B when in complex with complement subcomponent C3b or with cobra venom factor.. Its activity is regulated as follows. Circulates in plasma in a mature but self-inhibited form. Activated by factor B (CFB), which displaces the self-inhibition loop. Associates with CFB complexed with complement C3b. Its function is as follows. Serine protease that initiates the alternative pathway of the complement system, a cascade of proteins that leads to phagocytosis and breakdown of pathogens and signaling that strengthens the adaptive immune system. In contrast to other complement pathways (classical, lectin and GZMK) that are directly activated by pathogens or antigen-antibody complexes, the alternative complement pathway is initiated by the spontaneous hydrolysis of complement C3. The alternative complement pathway acts as an amplification loop that enhances complement activation by mediating the formation of C3 and C5 convertases. Activated CFD cleaves factor B (CFB) when the latter is complexed with complement C3b, activating the C3 convertase of the alternative pathway. This is Complement factor D (CFD) from Sus scrofa (Pig).